Reading from the N-terminus, the 304-residue chain is Xylanase inhibitor protein 1 (304 aa).

A signal peptide spans 1-30; that stretch reads MAPLAARRPACLLALLSVAAALFLTPTALA. The region spanning 36–304 is the GH18 domain; that stretch reads GQVTVFWGRN…NYSSLIKYYA (269 aa). An intrachain disulfide couples C55 to C96. Residue N119 is glycosylated (N-linked (GlcNAc...) asparagine). The active-site Proton donor is the E158. Positions 178-184 are interaction with fungal GH11 xylanase; it reads IRGGPGK. C194 and C225 are oxidised to a cystine. The segment at 262-275 is interaction with fungal GH10 xylanase; the sequence is HPKNVYYGVAPVAQ. N295 carries N-linked (GlcNAc...) asparagine glycosylation.

It belongs to the glycosyl hydrolase 18 family. Xylanase inhibitor subfamily. In terms of assembly, binds to fungal GH10 and GH11 xylanases. Also forms a ternary complex with barley alpha-amylase 1 (AMY1) and insoluble starch.

The protein resides in the secreted. Its function is as follows. Fungal xylanase inhibitor. Possesses competitive inhibiting activity against fungal endo-1,4-beta-D-xylanases belonging to glycoside hydrolase family 10 (GH10) and family 11 (GH11). Possesses also inhibitory activity towards barley alpha-amylases. Binding to xylanases or amylases is necessary for inhibition activity. May function in plant defense against secreted fungal pathogen xylanases. Is similar to class III chitinases, but does not exhibit chitinase activity. The protein is Xylanase inhibitor protein 1 of Triticum aestivum (Wheat).